We begin with the raw amino-acid sequence, 33 residues long: Pardaxin P-4 (33 aa).

This sequence belongs to the pardaxin family. As to quaternary structure, monomer. In aqueous solution exists as a tetramer.

It localises to the secreted. The protein resides in the target cell membrane. In terms of biological role, exhibits unusual shark repellent and surfactant properties. Forms voltage-dependent, ion-permeable channels in membranes. At high concentration causes cell membrane lysis. This is Pardaxin P-4 from Pardachirus marmoratus (Finless sole).